The following is a 75-amino-acid chain: UPF0352 protein VSAL_I1058 (75 aa).

The protein belongs to the UPF0352 family.

This Aliivibrio salmonicida (strain LFI1238) (Vibrio salmonicida (strain LFI1238)) protein is UPF0352 protein VSAL_I1058.